We begin with the raw amino-acid sequence, 477 residues long: Leukotoxin export protein LtxD (477 aa).

The chain crosses the membrane as a helical span at residues 64–84 (IMLFLTLAIIVSIFSNVEIIA). Residues 206–287 (LNLNKKEAEK…ENEVLLAKEE (82 aa)) are a coiled coil.

The protein belongs to the membrane fusion protein (MFP) (TC 8.A.1) family. Probably part of a complex composed of LtxB, LtxD and TdeA, which forms a single transport channel across the two membranes.

Its subcellular location is the cell inner membrane. Functionally, involved in the export of the LtxA leukotoxin. The sequence is that of Leukotoxin export protein LtxD from Aggregatibacter actinomycetemcomitans (Actinobacillus actinomycetemcomitans).